Here is a 314-residue protein sequence, read N- to C-terminus: tRNA dimethylallyltransferase (314 aa).

13–20 (GPTAVGKT) contributes to the ATP binding site. 15 to 20 (TAVGKT) is a binding site for substrate. The segment at 38 to 41 (DSMQ) is interaction with substrate tRNA.

It belongs to the IPP transferase family. Monomer. Requires Mg(2+) as cofactor.

The catalysed reaction is adenosine(37) in tRNA + dimethylallyl diphosphate = N(6)-dimethylallyladenosine(37) in tRNA + diphosphate. In terms of biological role, catalyzes the transfer of a dimethylallyl group onto the adenine at position 37 in tRNAs that read codons beginning with uridine, leading to the formation of N6-(dimethylallyl)adenosine (i(6)A). In Bacillus velezensis (strain DSM 23117 / BGSC 10A6 / LMG 26770 / FZB42) (Bacillus amyloliquefaciens subsp. plantarum), this protein is tRNA dimethylallyltransferase.